The chain runs to 185 residues: Large ribosomal subunit protein uL22 (185 aa).

The protein belongs to the universal ribosomal protein uL22 family. In terms of assembly, part of the 50S ribosomal subunit.

This protein binds specifically to 23S rRNA. It makes multiple contacts with different domains of the 23S rRNA in the assembled 50S subunit and ribosome. In terms of biological role, the globular domain of the protein is located near the polypeptide exit tunnel on the outside of the subunit, while an extended beta-hairpin is found that lines the wall of the exit tunnel in the center of the 70S ribosome. In Caldivirga maquilingensis (strain ATCC 700844 / DSM 13496 / JCM 10307 / IC-167), this protein is Large ribosomal subunit protein uL22.